A 473-amino-acid polypeptide reads, in one-letter code: H(+)/Cl(-) exchange transporter ClcA (473 aa).

The Cytoplasmic portion of the chain corresponds to 1–32; it reads MKTDNSTFLAQQIVRLRRRDQIRRLMQRDKTP. A helical membrane pass occupies residues 33–69; that stretch reads LAILFMAAVVGTLTGLVGVAFEKAVSWVQNMRIGALV. Over 70 to 76 the chain is Periplasmic; it reads QVADHAF. Residues 77-100 traverse the membrane as a helical segment; it reads LLWPLAFILSALLAMVGYFLVRKF. The Selectivity filter part_1 signature appears at 106 to 110; it reads GSGIP. Serine 107 serves as a coordination point for chloride. Positions 109–116 form an intramembrane region, helical; sequence IPEIEGAL. At 117–123 the chain is on the cytoplasmic side; the sequence is EELRPVR. 2 helical membrane-spanning segments follow: residues 124-141 and 148-166; these read WWRV…TLGA and EGPT…LDVF. Positions 146-150 match the Selectivity filter part_2 motif; the sequence is GREGP. Residues 167–176 are Cytoplasmic-facing; sequence RMRSAEARHT. 2 consecutive intramembrane regions (helical) follow at residues 177–189 and 193–201; these read LLAT…LSAA and PLAGILFII. Over 202–214 the chain is Cytoplasmic; sequence EEMRPQFRYNLIS. Residues 215 to 232 form a helical membrane-spanning segment; it reads IKAVFTGVIMSSIVFRIF. The Periplasmic portion of the chain corresponds to 233–252; the sequence is NGEAPIIEVGKLSDAPVNTL. Residues 253-281 traverse the membrane as a helical segment; it reads WLYLILGIIFGCVGPVFNSLVLRTQDMFQ. Topologically, residues 282–287 are cytoplasmic; it reads RFHGGE. A helical transmembrane segment spans residues 288 to 309; it reads IKKWVLMGGAIGGLCGILGLIE. Topologically, residues 310-329 are periplasmic; sequence PEAAGGGFNLIPIAAAGNFS. The next 2 helical transmembrane spans lie at 330–349 and 355–376; these read VGLL…LCFS and GIFA…MAAA. Positions 355–359 match the Selectivity filter part_3 motif; sequence GIFAP. 2 residues coordinate chloride: isoleucine 356 and phenylalanine 357. The Periplasmic segment spans residues 377–386; sequence VLFPQYHLEA. The helical intramembrane region spans 387–401; the sequence is GTFAIAGMGALMAAS. The note=Loop between two helices intramembrane region spans 402–404; sequence VRA. Positions 405 to 416 form an intramembrane region, helical; it reads PLTGIVLVLEMT. The segment at residues 417–421 is an intramembrane region (note=Loop between two helices); sequence DNYQL. A helical membrane pass occupies residues 422–438; that stretch reads ILPMIITCLGATLLAQF. The Cytoplasmic portion of the chain corresponds to 439–473; the sequence is LGGKPLYSTILARTLAKQDAEQAAKNQNAPAGENT. Tyrosine 445 serves as a coordination point for chloride.

Belongs to the chloride channel (TC 2.A.49) family. ClcA subfamily. Homodimer.

The protein localises to the cell inner membrane. It carries out the reaction 2 chloride(in) + H(+)(out) = 2 chloride(out) + H(+)(in). Its function is as follows. Proton-coupled chloride transporter. Functions as antiport system and exchanges two chloride ions for 1 proton. Probably acts as an electrical shunt for an outwardly-directed proton pump that is linked to amino acid decarboxylation, as part of the extreme acid resistance (XAR) response. This Salmonella schwarzengrund (strain CVM19633) protein is H(+)/Cl(-) exchange transporter ClcA.